Here is a 250-residue protein sequence, read N- to C-terminus: 4-hydroxy-tetrahydrodipicolinate reductase (250 aa).

NAD(+)-binding positions include glycine 10–isoleucine 15, glycine 78–threonine 80, and alanine 105–phenylalanine 108. The active-site Proton donor/acceptor is histidine 135. (S)-2,3,4,5-tetrahydrodipicolinate is bound at residue histidine 136. The Proton donor role is filled by lysine 139. Glycine 145 to threonine 146 is a (S)-2,3,4,5-tetrahydrodipicolinate binding site.

This sequence belongs to the DapB family.

The protein localises to the cytoplasm. The catalysed reaction is (S)-2,3,4,5-tetrahydrodipicolinate + NAD(+) + H2O = (2S,4S)-4-hydroxy-2,3,4,5-tetrahydrodipicolinate + NADH + H(+). The enzyme catalyses (S)-2,3,4,5-tetrahydrodipicolinate + NADP(+) + H2O = (2S,4S)-4-hydroxy-2,3,4,5-tetrahydrodipicolinate + NADPH + H(+). It participates in amino-acid biosynthesis; L-lysine biosynthesis via DAP pathway; (S)-tetrahydrodipicolinate from L-aspartate: step 4/4. Functionally, catalyzes the conversion of 4-hydroxy-tetrahydrodipicolinate (HTPA) to tetrahydrodipicolinate. The polypeptide is 4-hydroxy-tetrahydrodipicolinate reductase (Streptomyces coelicolor (strain ATCC BAA-471 / A3(2) / M145)).